The following is a 570-amino-acid chain: MWLLQPLLLCVPLSLAVHGQQKPQVPDYPGELHCGLQSLQFAINPSPGKATPALIVWDNRGLPHKLQNNSGCGTWVRESPGGSVLLDASYSSCYVNEWVSTTQSPGTSRPPTPASRVTPQDSHYVMIVGVEGTDAAGRRVTNTKVLRCPRNPPDQALVSSLSPSPLQNVALEAPNADLCDSVPKWDRLPCASSPITQGDCNKLGCCYKSEANSCYYGNTVTSRCTQDGHFSIAVSRNVTSPPLLLNSLRLAFGKDRECNPVKATRAFALFFFPFNSCGTTRWVTGDQAVYENELVAARDVRTWSHGSITRDSIFRLRVSCSYSVRSNAFPLSVQVFTIPPPHLKTQHGPLTLELKIAKDKHYGSYYTIGDYPVVKLLRDPIYVEVSIRHRTDPSLGLLLHNCWATPGKNSQSLSQWPILVKGCPYVGDNYQTQLIPVQKALDTPFPSYYKRFSIFTFSFVDTMAKWALRGPVYLHCNVSICQPAGTSSCRITCPVARRRRHSDLHHHSSTASISSKGPMILLQATMDSAEKLHKNSSSPIDSQALWMAGLSGTLIFGFLLVSYLAIRKRR.

A signal peptide spans 1–19; the sequence is MWLLQPLLLCVPLSLAVHG. The Extracellular segment spans residues 20 to 545; it reads QQKPQVPDYP…SSSPIDSQAL (526 aa). Residue asparagine 68 is glycosylated (N-linked (GlcNAc...) asparagine). In terms of domain architecture, P-type spans 177 to 218; that stretch reads DLCDSVPKWDRLPCASSPITQGDCNKLGCCYKSEANSCYYGN. One can recognise a ZP domain in the interval 223–496; it reads RCTQDGHFSI…SSCRITCPVA (274 aa). An N-linked (GlcNAc...) asparagine glycan is attached at asparagine 237. A glycan (O-linked (GalNAc...) threonine) is linked at threonine 337. The cysteines at positions 402 and 476 are disulfide-linked. 2 N-linked (GlcNAc...) asparagine glycosylation sites follow: asparagine 477 and asparagine 535. The propeptide at 497 to 570 is removed in mature form; the sequence is RRRRHSDLHH…VSYLAIRKRR (74 aa). The chain crosses the membrane as a helical span at residues 546–566; it reads WMAGLSGTLIFGFLLVSYLAI. Over 567 to 570 the chain is Cytoplasmic; the sequence is RKRR.

The protein belongs to the ZP domain family. ZPB subfamily. Proteolytically cleaved before the transmembrane segment to yield the secreted ectodomain incorporated in the zona pellucida. In terms of tissue distribution, expressed in oocytes.

The protein resides in the zona pellucida. It is found in the cell membrane. Functionally, component of the zona pellucida, an extracellular matrix surrounding oocytes which mediates sperm binding, induction of the acrosome reaction and prevents post-fertilization polyspermy. The zona pellucida is composed of 3 to 4 glycoproteins, ZP1, ZP2, ZP3, and ZP4. ZP4 may act as a sperm receptor. The chain is Zona pellucida sperm-binding protein 4 (ZP4) from Felis catus (Cat).